The primary structure comprises 337 residues: 1-aminocyclopropane-1-carboxylate deaminase (337 aa).

Lys50 is subject to N6-(pyridoxal phosphate)lysine. Ser77 acts as the Nucleophile in catalysis.

The protein belongs to the ACC deaminase/D-cysteine desulfhydrase family. Homotrimer. Requires pyridoxal 5'-phosphate as cofactor.

The enzyme catalyses 1-aminocyclopropane-1-carboxylate + H2O = 2-oxobutanoate + NH4(+). In terms of biological role, catalyzes a cyclopropane ring-opening reaction, the irreversible conversion of 1-aminocyclopropane-1-carboxylate (ACC) to ammonia and alpha-ketobutyrate. Allows growth on ACC as a nitrogen source. This is 1-aminocyclopropane-1-carboxylate deaminase from Bradyrhizobium diazoefficiens (strain JCM 10833 / BCRC 13528 / IAM 13628 / NBRC 14792 / USDA 110).